A 456-amino-acid polypeptide reads, in one-letter code: Solute carrier family 49 member 4 homolog (456 aa).

The Cytoplasmic segment spans residues 1-29; it reads MGLEWSSPGERQPLLYPGGPRAPRVFGRR. Residues 14–15 carry the Di-leucine motif; mediates lysosomal localization motif; sequence LL. Residues 30 to 50 form a helical membrane-spanning segment; the sequence is WLVLLLFSLLAFLQGLVWNSW. The Lumenal segment spans residues 51-67; that stretch reads GPIQNSARTAYNFSGLD. Asn62 is a glycosylation site (N-linked (GlcNAc...) asparagine). Residues 68–88 form a helical membrane-spanning segment; it reads IALLVLWGPIGFLPCFLFMWL. Over 89–95 the chain is Cytoplasmic; the sequence is MDNRGLR. Residues 96–116 traverse the membrane as a helical segment; it reads VTVLLTALLMVLGAGLRCVPV. Topologically, residues 117-131 are lumenal; the sequence is QDLAVRRKLIHGGQL. Residues 132–152 traverse the membrane as a helical segment; that stretch reads LNGFAGPTVMNAAPFLSTTWF. Topologically, residues 153-162 are cytoplasmic; the sequence is SPDERATATA. A helical membrane pass occupies residues 163 to 183; that stretch reads IASMLSYLGGACAFLVGPLVV. At 184–207 the chain is on the lumenal side; the sequence is PAPNSTSGLLLYSGSVGAIRDRIE. The N-linked (GlcNAc...) asparagine glycan is linked to Asn187. A helical membrane pass occupies residues 208 to 228; that stretch reads AVMYAEFGIIFVVFAAILAYF. Residues 229–259 lie on the Cytoplasmic side of the membrane; it reads PSRPPVPPSVAAASRRLSYRTSILRLLSNVR. Residues 260 to 280 traverse the membrane as a helical segment; the sequence is FLLIVLAYAIPLGFYAGWSGV. The Lumenal portion of the chain corresponds to 281–292; that stretch reads LDLILTPVHVTQ. The chain crosses the membrane as a helical span at residues 293–313; it reads VDAGWVGFWSIVGGCVVGIAV. At 314 to 326 the chain is on the cytoplasmic side; it reads GRFADSIRGVLKP. Residues 327–347 form a helical membrane-spanning segment; the sequence is ILLLLFSGAALSSTWFTLTFL. Residues 348–362 lie on the Lumenal side of the membrane; sequence SNVTHLPLTTATLYT. Asn349 carries an N-linked (GlcNAc...) asparagine glycan. The chain crosses the membrane as a helical span at residues 363 to 383; sequence SCILIGVFLSGTVPIFFEMFV. Topologically, residues 384–392 are cytoplasmic; it reads ETVYPIPEG. The helical transmembrane segment at 393 to 413 threads the bilayer; the sequence is ITCGVVTFLSNLFMGVLLLFL. The Lumenal portion of the chain corresponds to 414 to 420; that stretch reads TLYQTNL. The N-linked (GlcNAc...) asparagine glycan is linked to Asn419. The chain crosses the membrane as a helical span at residues 421–441; that stretch reads SWLNWCLTGSCFLSLLFIACF. Residues 442–456 are Cytoplasmic-facing; sequence RESYDRLYLDVFVSV.

The protein belongs to the major facilitator superfamily.

It is found in the lysosome membrane. The enzyme catalyses pyridoxine(out) + n H(+)(out) = pyridoxine(in) + n H(+)(in). Its function is as follows. Mediates H(+)-dependent pyridoxine transport. The sequence is that of Solute carrier family 49 member 4 homolog (slc49a4) from Xenopus tropicalis (Western clawed frog).